The following is a 269-amino-acid chain: Putative pyruvate, phosphate dikinase regulatory protein (269 aa).

ADP is bound at residue 151–158 (GVSRSSKT).

This sequence belongs to the pyruvate, phosphate/water dikinase regulatory protein family. PDRP subfamily.

It carries out the reaction N(tele)-phospho-L-histidyl/L-threonyl-[pyruvate, phosphate dikinase] + ADP = N(tele)-phospho-L-histidyl/O-phospho-L-threonyl-[pyruvate, phosphate dikinase] + AMP + H(+). The enzyme catalyses N(tele)-phospho-L-histidyl/O-phospho-L-threonyl-[pyruvate, phosphate dikinase] + phosphate + H(+) = N(tele)-phospho-L-histidyl/L-threonyl-[pyruvate, phosphate dikinase] + diphosphate. Its function is as follows. Bifunctional serine/threonine kinase and phosphorylase involved in the regulation of the pyruvate, phosphate dikinase (PPDK) by catalyzing its phosphorylation/dephosphorylation. This Geobacter metallireducens (strain ATCC 53774 / DSM 7210 / GS-15) protein is Putative pyruvate, phosphate dikinase regulatory protein.